A 268-amino-acid chain; its full sequence is Enoyl-[acyl-carrier-protein] reductase [NADH] 2 (268 aa).

NAD(+) is bound by residues Gly-14, Ser-20 to Ile-21, Gln-41, Asp-65 to Val-66, and Ile-93. Active-site proton acceptor residues include Tyr-146 and Tyr-156. Residues Lys-163 and Ile-192 to Ala-196 each bind NAD(+).

Belongs to the short-chain dehydrogenases/reductases (SDR) family. FabI subfamily.

Its subcellular location is the cell inner membrane. It carries out the reaction a 2,3-saturated acyl-[ACP] + NAD(+) = a (2E)-enoyl-[ACP] + NADH + H(+). The protein operates within lipid metabolism; fatty acid biosynthesis. This Rhizobium meliloti (strain 1021) (Ensifer meliloti) protein is Enoyl-[acyl-carrier-protein] reductase [NADH] 2 (fabI2).